A 470-amino-acid chain; its full sequence is ATP synthase subunit beta (470 aa).

157–164 (GGAGVGKT) lines the ATP pocket.

This sequence belongs to the ATPase alpha/beta chains family. F-type ATPases have 2 components, CF(1) - the catalytic core - and CF(0) - the membrane proton channel. CF(1) has five subunits: alpha(3), beta(3), gamma(1), delta(1), epsilon(1). CF(0) has three main subunits: a(1), b(2) and c(9-12). The alpha and beta chains form an alternating ring which encloses part of the gamma chain. CF(1) is attached to CF(0) by a central stalk formed by the gamma and epsilon chains, while a peripheral stalk is formed by the delta and b chains.

The protein resides in the cell inner membrane. The catalysed reaction is ATP + H2O + 4 H(+)(in) = ADP + phosphate + 5 H(+)(out). Produces ATP from ADP in the presence of a proton gradient across the membrane. The catalytic sites are hosted primarily by the beta subunits. The chain is ATP synthase subunit beta from Citrifermentans bemidjiense (strain ATCC BAA-1014 / DSM 16622 / JCM 12645 / Bem) (Geobacter bemidjiensis).